A 481-amino-acid polypeptide reads, in one-letter code: F-box/LRR-repeat protein At3g03360 (481 aa).

The disordered stretch occupies residues 1 to 28 (MEKESQENSTRPDASSTVFSSSKSTCAS). Positions 14–28 (ASSTVFSSSKSTCAS) are enriched in low complexity. The F-box domain occupies 36 to 84 (GDLISRLPDDILQLILSYLPTRLAIKTSVLSRRWRHVWSDTWSLSFHRD). LRR repeat units lie at residues 118–145 (SRPDTHADIDSWINFAMSRNVENLSLYL), 196–221 (HCNISDESIAIILSGCPILESLLLFF), 295–320 (EADFHQTMVVKMLEKCQNVEKLTLGA), 350–375 (ISRYVIHGIVKVLQNSPDLKKLTIHP), and 413–439 (RRNVESKQVASFLQLVLKTISTLELIV).

The sequence is that of F-box/LRR-repeat protein At3g03360 from Arabidopsis thaliana (Mouse-ear cress).